A 472-amino-acid chain; its full sequence is NALCN channel auxiliary factor 2 (472 aa).

The helical transmembrane segment at 47 to 67 (LASLLFFTVLLADHLWLCAGA) threads the bilayer. The interval 77–114 (AMRPPWGAGRERQPVPPRAVLPLPPPPPGEPSAPPGTC) is disordered. The segment covering 90-110 (PVPPRAVLPLPPPPPGEPSAP) has biased composition (pro residues). 2 N-linked (GlcNAc...) asparagine glycosylation sites follow: Asn120 and Asn193. The helical transmembrane segment at 433 to 453 (LCVLVLMLLHTVVSFSSNQGG) threads the bilayer.

Belongs to the NALF family.

Its subcellular location is the membrane. In terms of biological role, probable component of the NALCN channel complex, a channel that regulates the resting membrane potential and controls neuronal excitability. This chain is NALCN channel auxiliary factor 2, found in Homo sapiens (Human).